A 425-amino-acid polypeptide reads, in one-letter code: Histone-binding protein RBBP4-B (425 aa).

Ala-2 carries the post-translational modification N-acetylalanine. 7 WD repeats span residues 32-125 (YDLV…NHEG), 126-175 (EVNR…RLRG), 176-223 (HQKE…KTIF), 225-270 (GHTA…HSVD), 271-314 (AHTA…HSFE), 315-371 (SHKD…FIHG), and 372-404 (GHTA…VWQM).

This sequence belongs to the WD repeat RBAP46/RBAP48/MSI1 family. Binds directly to histone H4, probably via helix 1 of the histone fold, a region that is not accessible when histone H4 is in chromatin. Probably forms a large corepressor complex that contains ncor1, sin3a, hdac1-A and/or hdac1-B, hdac2, rbbp4-A and/or rbbp4-B and possibly rbbp7.

Its subcellular location is the nucleus. The protein resides in the chromosome. It is found in the telomere. Core histone-binding subunit that may target chromatin assembly factors, chromatin remodeling factors and histone deacetylases to their histone substrates in a manner that is regulated by nucleosomal DNA. Component of several complexes which regulate chromatin metabolism. The protein is Histone-binding protein RBBP4-B (rbbp4-b) of Xenopus laevis (African clawed frog).